We begin with the raw amino-acid sequence, 124 residues long: Small polypeptide ROTUNDIFOLIA LIKE 3 (124 aa).

Residues 1–25 are disordered; that stretch reads MEDERWKLSSSKGRSKSGRSCSSSS. Asn35 and Asn38 each carry an N-linked (GlcNAc...) asparagine glycan. A helical membrane pass occupies residues 59-75; that stretch reads AWSAAGAGGGGASSSSS. The tract at residues 60–95 is disordered; the sequence is WSAAGAGGGGASSSSSSQHQHQQQQQQSNNSQRLSK. Over residues 71-91 the composition is skewed to low complexity; that stretch reads SSSSSSQHQHQQQQQQSNNSQ. Residue Asn88 is glycosylated (N-linked (GlcNAc...) asparagine). The interval 92–124 is required for DVL/RTFL small polypeptide activity; the sequence is RLSKKCVEAVKEHRARFYIVRRCVSMLVCWRDY.

Belongs to the DVL/RTFL small polypeptides family.

It localises to the cell membrane. Small polypeptide acting as a regulatory molecule which coordinates cellular responses required for differentiation, growth and development, probably by restricting polar cell proliferation in lateral organs (e.g. leaves and petioles). The polypeptide is Small polypeptide ROTUNDIFOLIA LIKE 3 (Oryza sativa subsp. indica (Rice)).